The chain runs to 116 residues: Beta-2-microglobulin (116 aa).

The first 19 residues, 1 to 19, serve as a signal peptide directing secretion; sequence MRALITFALLCLLYITVQG. An Ig-like C1-type domain is found at 24–111; sequence PKVHVYSHFP…RHMKETKKFS (88 aa). Residues C44 and C99 are joined by a disulfide bond.

It belongs to the beta-2-microglobulin family. As to quaternary structure, heterodimer of an alpha chain and a beta chain. Beta-2-microglobulin is the beta-chain of major histocompatibility complex class I molecules.

The protein localises to the secreted. Its function is as follows. Component of the class I major histocompatibility complex (MHC). Involved in the presentation of peptide antigens to the immune system. The chain is Beta-2-microglobulin (b2m) from Danio rerio (Zebrafish).